We begin with the raw amino-acid sequence, 151 residues long: MSKYQKKSDGELKRTLTKLQYDVTQNAHTEPPYTNEYNRHYEKGIYVDITSGEPLFISTDKFKSGCGWPAFTKPISQDLIANYRDESHGMIRTEVRAKNSNSHLGHVFRDGPEEHGGLRYCINSAALKFIPFAEMESAGYGEYLKLFKESN.

One can recognise a MsrB domain in the interval 9–132; it reads DGELKRTLTK…NSAALKFIPF (124 aa). Cysteine 121 serves as the catalytic Nucleophile.

The protein belongs to the MsrB Met sulfoxide reductase family.

It carries out the reaction L-methionyl-[protein] + [thioredoxin]-disulfide + H2O = L-methionyl-(R)-S-oxide-[protein] + [thioredoxin]-dithiol. The polypeptide is Peptide methionine sulfoxide reductase MsrB (Mycoplasma pneumoniae (strain ATCC 29342 / M129 / Subtype 1) (Mycoplasmoides pneumoniae)).